The following is a 671-amino-acid chain: UvrABC system protein B (671 aa).

A Helicase ATP-binding domain is found at 25–178 (EGIKKGYKHQ…DAMLKKLVEI (154 aa)). ATP is bound at residue 38 to 45 (GVTGSGKT). Residues 91-114 (YYDYYQPEAYIPETDTYIEKDALI) carry the Beta-hairpin motif. Residues 435-601 (QVEDLLEEIH…TVKSKIKDIL (167 aa)) enclose the Helicase C-terminal domain. The region spanning 626–661 (EETIKKLEQEMKHAAENLEFEKAAEIRDKIFKIKEK) is the UVR domain.

The protein belongs to the UvrB family. Forms a heterotetramer with UvrA during the search for lesions. Interacts with UvrC in an incision complex.

The protein localises to the cytoplasm. Functionally, the UvrABC repair system catalyzes the recognition and processing of DNA lesions. A damage recognition complex composed of 2 UvrA and 2 UvrB subunits scans DNA for abnormalities. Upon binding of the UvrA(2)B(2) complex to a putative damaged site, the DNA wraps around one UvrB monomer. DNA wrap is dependent on ATP binding by UvrB and probably causes local melting of the DNA helix, facilitating insertion of UvrB beta-hairpin between the DNA strands. Then UvrB probes one DNA strand for the presence of a lesion. If a lesion is found the UvrA subunits dissociate and the UvrB-DNA preincision complex is formed. This complex is subsequently bound by UvrC and the second UvrB is released. If no lesion is found, the DNA wraps around the other UvrB subunit that will check the other stand for damage. The chain is UvrABC system protein B from Thermodesulfovibrio yellowstonii (strain ATCC 51303 / DSM 11347 / YP87).